The sequence spans 179 residues: Large ribosomal subunit protein uL5 (179 aa).

The protein belongs to the universal ribosomal protein uL5 family. Part of the 50S ribosomal subunit; part of the 5S rRNA/L5/L18/L25 subcomplex. Contacts the 5S rRNA and the P site tRNA. Forms a bridge to the 30S subunit in the 70S ribosome.

In terms of biological role, this is one of the proteins that bind and probably mediate the attachment of the 5S RNA into the large ribosomal subunit, where it forms part of the central protuberance. In the 70S ribosome it contacts protein S13 of the 30S subunit (bridge B1b), connecting the 2 subunits; this bridge is implicated in subunit movement. Contacts the P site tRNA; the 5S rRNA and some of its associated proteins might help stabilize positioning of ribosome-bound tRNAs. This Shewanella amazonensis (strain ATCC BAA-1098 / SB2B) protein is Large ribosomal subunit protein uL5.